The chain runs to 700 residues: MSSDNGSGRQGGDRGGSTGYNLLMYLGFGAIIATLVALYVLQMFQTSLDYTDLERLVAASQYEKDESKLTAGSPGYIDVKVEARNTLRRMRVSNLRKVELGPTAVRGQIDLVELKPVGTSGDRWEPDSKTLRQNVEFRTNLSDKGSNRDDIETAIRNSNIPFRHADPPGPWEQHSQLIIGMLLAAMLIYIVVRRLSAAGSPMSFGRSRGKLYAQEELGITFNDVAGIDEAVEEVREVVDFLRSPEKYQKLGGRIPKGVLLVGPPGTGKTLLAKAIAGEAGVPFFSLSGSDFVEMFVGVGAARVRDMFQQAEAKAPCIIFIDELDALGKSRGAGIMGGHDEREQTLNALLVEMDGFGSNSGVIVMAATNRPETLDPALLRPGRFDRHVLVDRPDIKGREDILKVHVKNVKLDPTVDLHKVAAITPGFVGADLANLVNEAALLAARAEKTAVGMNEFNEGVERVTAGLEKKQRVMNEDEKLRVAYHESGHALVAYSLPNTDPVHKVSIIPRGLAALGYTMQRPEGDRFLMTQSELESRIQVLLAGTIAEEIIFTDISTGAQNDLERATDIARRMCMEFGMSRLGRVNYRESNRSAFLASGGSGEERVRSVSEQTLREIDQEVRRIIDESIEKVRHILDVRRGALVSLTNRLMEVESVDSDELKRIIDETSPGPLVVPGTLPANTMRSTTEPVITAPATERSG.

Topologically, residues 1-20 (MSSDNGSGRQGGDRGGSTGY) are cytoplasmic. Residues 21–41 (NLLMYLGFGAIIATLVALYVL) traverse the membrane as a helical segment. The Periplasmic segment spans residues 42–171 (QMFQTSLDYT…FRHADPPGPW (130 aa)). A helical membrane pass occupies residues 172-192 (EQHSQLIIGMLLAAMLIYIVV). Topologically, residues 193 to 700 (RRLSAAGSPM…ITAPATERSG (508 aa)) are cytoplasmic. 262–269 (GPPGTGKT) serves as a coordination point for ATP. His-484 provides a ligand contact to Zn(2+). Glu-485 is a catalytic residue. Positions 488 and 561 each coordinate Zn(2+).

The protein in the central section; belongs to the AAA ATPase family. In the C-terminal section; belongs to the peptidase M41 family. Homohexamer. Requires Zn(2+) as cofactor.

Its subcellular location is the cell inner membrane. In terms of biological role, acts as a processive, ATP-dependent zinc metallopeptidase for both cytoplasmic and membrane proteins. Plays a role in the quality control of integral membrane proteins. The chain is ATP-dependent zinc metalloprotease FtsH from Pirellula staleyi (strain ATCC 27377 / DSM 6068 / ICPB 4128) (Pirella staleyi).